The sequence spans 259 residues: MLLNIANLVGKHTIKFAQSVGIFALFSFIAISSIIKPPLYLSLIMRQLLFIGFHSLPVVAMTTFFSGAVLALQSYTGFSRFSAENSIATVVVLSLTRELGPVLAGLIVAGRVGASIAAEIATMKVTEQVDALYTLSTDPIKYLVCPRVIAAIITMPCLVLIGDVIGVMGGYLVGIYKLNFNSTAYLTSTFQYLELIDVISGLVKATVFGFIISIISCYSGYYSGKGAKGVGRATTSAVVNSSILILISNYLITELLFKV.

Transmembrane regions (helical) follow at residues 20-40 (VGIF…PPLY), 49-69 (LFIG…SGAV), 148-168 (VIAA…IGVM), 195-215 (LIDV…ISII), and 237-257 (AVVN…ELLF).

This sequence belongs to the MlaE permease family.

The protein localises to the cell inner membrane. Could be part of an ABC transporter complex. This chain is Probable ABC transporter permease protein RT0041, found in Rickettsia typhi (strain ATCC VR-144 / Wilmington).